Here is a 303-residue protein sequence, read N- to C-terminus: Dihydroorotate dehydrogenase B (NAD(+)), catalytic subunit (303 aa).

FMN is bound by residues serine 21 and 45 to 46 (KG). Residues lysine 45 and 69–73 (NSIGL) contribute to the substrate site. Residues asparagine 99 and asparagine 127 each contribute to the FMN site. Asparagine 127 contacts substrate. The active-site Nucleophile is the cysteine 130. FMN contacts are provided by lysine 165 and isoleucine 191. 192–193 (NT) provides a ligand contact to substrate. FMN-binding positions include glycine 217, 243-244 (GG), and 265-266 (GT).

This sequence belongs to the dihydroorotate dehydrogenase family. Type 1 subfamily. As to quaternary structure, heterotetramer of 2 PyrK and 2 PyrD type B subunits. The cofactor is FMN.

It localises to the cytoplasm. It carries out the reaction (S)-dihydroorotate + NAD(+) = orotate + NADH + H(+). It participates in pyrimidine metabolism; UMP biosynthesis via de novo pathway; orotate from (S)-dihydroorotate (NAD(+) route): step 1/1. In terms of biological role, catalyzes the conversion of dihydroorotate to orotate with NAD(+) as electron acceptor. This Thermodesulfovibrio yellowstonii (strain ATCC 51303 / DSM 11347 / YP87) protein is Dihydroorotate dehydrogenase B (NAD(+)), catalytic subunit (pyrD).